We begin with the raw amino-acid sequence, 102 residues long: Gastrin/cholecystokinin-like peptide (102 aa).

Positions 1–20 (MDKKVCVSILLAMLAIAALC) are cleaved as a signal peptide. The propeptide occupies 21–45 (RPMTELESARHGAQRKNSISDVSRR). Tyrosine 86 is subject to Sulfotyrosine. Position 92 is a phenylalanine amide (phenylalanine 92). A propeptide spanning residues 96–102 (SSEVTES) is cleaved from the precursor.

Belongs to the gastrin/cholecystokinin family. In terms of tissue distribution, expressed in antrum, duodenum, colon, pancreas, brain and testis. No expression found in kidney, lung, liver, skin or distal two-thirds of small intestine. In the brain, strongly expressed in the pituitary gland with moderate expression in the neural lobe, brain stem and hypothalamus.

Its subcellular location is the secreted. Functionally, may control digestion processes. The polypeptide is Gastrin/cholecystokinin-like peptide (GAST) (Aquarana catesbeiana (American bullfrog)).